Reading from the N-terminus, the 107-residue chain is U1-lycotoxin-Ls1b (107 aa).

An N-terminal signal peptide occupies residues 1 to 20; the sequence is MMKVLVVFALLVTLISYSSS. A propeptide spanning residues 21-41 is cleaved from the precursor; it reads EGIDDLEADELLSLMANEQTR. 4 disulfide bridges follow: C44-C59, C51-C68, C58-C86, and C70-C84.

The protein belongs to the neurotoxin 19 (CSTX) family. 04 (U1-Lctx) subfamily. In terms of tissue distribution, expressed by the venom gland.

It localises to the secreted. This chain is U1-lycotoxin-Ls1b, found in Lycosa singoriensis (Wolf spider).